Reading from the N-terminus, the 546-residue chain is Probable E3 ubiquitin-protein ligase NGR_a03640 (546 aa).

The disordered stretch occupies residues 1 to 70; the sequence is MNVQRPGLAV…RPWEGRPQEA (70 aa). The interaction with target proteins stretch occupies residues 1 to 248; the sequence is MNVQRPGLAV…YAGPQIFLPM (248 aa). A compositionally biased stretch (low complexity) spans 22–48; the sequence is SEPGSPAAAARWVEASTEAEASAASSS. Basic and acidic residues predominate over residues 58-67; it reads AEERPWEGRP. LRR repeat units lie at residues 104–125, 126–144, 145–166, 167–186, and 187–208; these read GLRR…LPGT, LLEL…DLPA, GLQR…LPAA, LEWL…MIPP, and ELIW…LLTQ. The interval 249–256 is linker; the sequence is GPVELARR. An NEL domain is found at 257–546; the sequence is PLHEVVADWL…KVLRGRGLEL (290 aa). Residues 257 to 546 are E3 ubiquitin-protein ligase catalytic domain; sequence PLHEVVADWL…KVLRGRGLEL (290 aa). The active-site Glycyl thioester intermediate is Cys338.

This sequence belongs to the LRR-containing bacterial E3 ligase family. Ubiquitinated in the presence of host E1 ubiquitin-activating enzyme, E2 ubiquitin-conjugating enzyme and ubiquitin.

It localises to the secreted. It is found in the host cytoplasm. Effector proteins function to alter host cell physiology and promote bacterial survival in host tissues. This protein is an E3 ubiquitin ligase that interferes with host's ubiquitination pathway. The protein is Probable E3 ubiquitin-protein ligase NGR_a03640 of Sinorhizobium fredii (strain NBRC 101917 / NGR234).